Reading from the N-terminus, the 446-residue chain is Pre-rRNA-processing protein crb3/ipi3 (446 aa).

WD repeat units follow at residues 74 to 113, 116 to 155, 172 to 214, 216 to 257, and 294 to 333; these read ILPE…LIYF, AHYQ…DQNS, GHKR…LLTT, ALPS…SNNV, and SCQS…VLRR.

It belongs to the WD repeat IPI3/WDR18 family. Component of the RIX1 complex, composed of ipi1, rix1/ipi2 and crb3/ipi3 in a 1:2:2 stoichiometry. The complex interacts (via rix1) with mdn1 (via its hexameric AAA ATPase ring) and the pre-60S ribosome particles. Interacts with rix1, gcr3 and Las1.

The protein resides in the nucleus. The protein localises to the chromosome. Functionally, required for both pre-rRNA processing and heterochromatic gene silencing. Component of the RIX1 complex required for processing of ITS2 sequences from 35S pre-rRNA. This is Pre-rRNA-processing protein crb3/ipi3 (crb3) from Schizosaccharomyces pombe (strain 972 / ATCC 24843) (Fission yeast).